The following is a 1530-amino-acid chain: Multidrug resistance-associated protein 1 (1530 aa).

Residues 1–33 (MALRDFCSVDGSDLFWEWNVTWNTSNPDFTKCF) are Extracellular-facing. An N-linked (GlcNAc...) asparagine glycan is attached at Asn-19. The helical transmembrane segment at 34-54 (QNTVLVWVPCSYLWVCFPFYF) threads the bilayer. Residues 55-74 (LYLSHHDRGYIQMTHLNKAK) are Cytoplasmic-facing. A helical transmembrane segment spans residues 75 to 95 (TALGFLLWIVCWADLFYSFWE). At 96–100 (RSMGK) the chain is on the extracellular side. A helical transmembrane segment spans residues 101–121 (LLAPVFLVSPTLLGITMLLAT). The Cytoplasmic segment spans residues 122-133 (FLIQIERRRGVQ). Residues 134–154 (SSGIMLTFWLIALLCALAILR) form a helical membrane-spanning segment. The Extracellular segment spans residues 155–172 (SKIMTALKEDARVDVFRD). A helical membrane pass occupies residues 173–193 (VTFYIYFSLVLIQLVLSCFSD). Residues 194–316 (RSPLFSETIN…KERDPSLFKV (123 aa)) are Cytoplasmic-facing. Phosphotyrosine is present on Tyr-277. Position 289 is a phosphoserine (Ser-289). A helical transmembrane segment spans residues 317-337 (LYKTFGPYFLMSFLFKAVHDL). The ABC transmembrane type-1 1 domain maps to 325–608 (FLMSFLFKAV…LPMVISSIVQ (284 aa)). Over 338-363 (MMFAGPEILKLLINFVNDKKAPEWQG) the chain is Extracellular. Residues 364-384 (YFYTALLFISACLQTLVLHQY) traverse the membrane as a helical segment. Topologically, residues 385–440 (FHICFVSGMRIKTAVIGAVYRKALVITNAARKSSTVGEIVNLMSVDAQRFMDLATY) are cytoplasmic. Residues 441–461 (INMIWSAPLQVILALYLLWLN) form a helical membrane-spanning segment. Residues 462-464 (LGP) lie on the Extracellular side of the membrane. Residues 465 to 485 (SVLAGVAVMVLMVPLNAVMAM) traverse the membrane as a helical segment. The Cytoplasmic portion of the chain corresponds to 486-547 (KTKTYQVAHM…VLKKSAYLAA (62 aa)). Position 503 is an N6-succinyllysine (Lys-503). The chain crosses the membrane as a helical span at residues 548–568 (VGTFTWVCTPFLVALSTFAVY). The Extracellular portion of the chain corresponds to 569–590 (VTVDENNILDAQKAFVSLALFN). Residues 591 to 611 (ILRFPLNILPMVISSIVQASV) traverse the membrane as a helical segment. At 612–966 (SLKRLRVFLS…VKLSVYWDYM (355 aa)) the chain is on the cytoplasmic side. Residues 644-868 (ITVKNATFTW…DGAFAEFLRT (225 aa)) enclose the ABC transporter 1 domain. 678–685 (GQVGCGKS) provides a ligand contact to ATP. Residues 912 to 939 (RQLSSSSSYSRDVSQHHTSTAELRKPGP) are disordered. Residues Ser-915 and Ser-930 each carry the phosphoserine modification. The helical transmembrane segment at 967–987 (KAIGLFISFLSIFLFLCNHVA) threads the bilayer. The region spanning 974–1255 (SFLSIFLFLC…LVRMSSEMET (282 aa)) is the ABC transmembrane type-1 2 domain. Residues 988–1024 (SLVSNYWLSLWTDDPIVNGTQEHTQVRLSVYGALGIS) are Extracellular-facing. An N-linked (GlcNAc...) asparagine glycan is attached at Asn-1005. Residues 1025-1045 (QGITVFGYSMAVSIGGIFASR) traverse the membrane as a helical segment. At 1046 to 1088 (RLHLDLLHNVLRSPISFFERTPSGNLVNRFSKELDTVDSMIPQ) the chain is on the cytoplasmic side. A helical transmembrane segment spans residues 1089 to 1109 (VIKMFMGSLFNVIGACIIILL). A topological domain (extracellular) is located at residue Ala-1110. Residues 1111 to 1131 (TPMAAVIIPPLGLIYFFVQRF) traverse the membrane as a helical segment. Over 1132 to 1202 (YVASSRQLKR…VANRWLAVRL (71 aa)) the chain is Cytoplasmic. Residues 1203 to 1223 (ECVGNCIVLFASLFAVISRHS) traverse the membrane as a helical segment. Topologically, residues 1224–1225 (LS) are extracellular. The chain crosses the membrane as a helical span at residues 1226–1246 (AGLVGLSVSYSLQVTTYLNWL). The Cytoplasmic portion of the chain corresponds to 1247–1530 (VRMSSEMETN…YSMAKDSGLV (284 aa)). One can recognise an ABC transporter 2 domain in the interval 1292–1526 (VEFRDYGLRY…RGLFYSMAKD (235 aa)). Residue 1326–1333 (GRTGAGKS) coordinates ATP.

It belongs to the ABC transporter superfamily. ABCC family. Conjugate transporter (TC 3.A.1.208) subfamily. Expressed in heart, spleen, lung, kidney, skeletal muscle, mammary gland and weaker in brain and liver.

It localises to the cell membrane. The protein resides in the basolateral cell membrane. The catalysed reaction is ATP + H2O + xenobioticSide 1 = ADP + phosphate + xenobioticSide 2.. It carries out the reaction an S-substituted glutathione(in) + ATP + H2O = an S-substituted glutathione(out) + ADP + phosphate + H(+). The enzyme catalyses sphing-4-enine 1-phosphate(in) + ATP + H2O = sphing-4-enine 1-phosphate(out) + ADP + phosphate + H(+). It catalyses the reaction leukotriene C4(in) + ATP + H2O = leukotriene C4(out) + ADP + phosphate + H(+). The catalysed reaction is 17beta-estradiol 17-O-(beta-D-glucuronate)(in) + ATP + H2O = 17beta-estradiol 17-O-(beta-D-glucuronate)(out) + ADP + phosphate + H(+). It carries out the reaction daunorubicin(in) + ATP + H2O = daunorubicin(out) + ADP + phosphate + H(+). The enzyme catalyses vincristine(in) + ATP + H2O = vincristine(out) + ADP + phosphate + H(+). It catalyses the reaction 2',3'-cGAMP(in) + ATP + H2O = 2',3'-cGAMP(out) + ADP + phosphate + H(+). The catalysed reaction is S-[(2E,6E,10E)-geranylgeranyl]-L-glutathione(in) + ATP + H2O = S-[(2E,6E,10E)-geranylgeranyl]-L-glutathione(out) + ADP + phosphate + H(+). It carries out the reaction prostaglandin A2-S-(R)-glutathione(in) + ATP + H2O = prostaglandin A2-S-(R)-glutathione(out) + ADP + phosphate + H(+). The enzyme catalyses prostaglandin A2-S-(S)-glutathione(in) + ATP + H2O = prostaglandin A2-S-(S)-glutathione(out) + ADP + phosphate + H(+). MK 571 inhibits sphingosine 1-phosphate and leukotriene C4 export. In terms of biological role, mediates export of organic anions and drugs from the cytoplasm. Mediates ATP-dependent transport of glutathione and glutathione conjugates, leukotriene C4, estradiol-17-beta-o-glucuronide, methotrexate, antiviral drugs and other xenobiotics. Confers resistance to anticancer drugs by decreasing accumulation of drug in cells, and by mediating ATP- and GSH-dependent drug export. Hydrolyzes ATP with low efficiency. Catalyzes the export of sphingosine 1-phosphate from mast cells independently of their degranulation. Participates in inflammatory response by allowing export of leukotriene C4 from leukotriene C4-synthesizing cells. Mediates ATP-dependent, GSH-independent cyclic GMP-AMP (cGAMP) export. Thus, by limiting intracellular cGAMP concentrations negatively regulates the cGAS-STING pathway. Exports S-geranylgeranyl-glutathione (GGG) in lymphoid cells and stromal compartments of lymphoid organs. ABCC1 (via extracellular transport) with GGT5 (via GGG catabolism) establish GGG gradients within lymphoid tissues to position P2RY8-positive lymphocytes at germinal centers in lymphoid follicles and restrict their chemotactic transmigration from blood vessels to the bone marrow parenchyma. Mediates basolateral export of GSH-conjugated R- and S-prostaglandin A2 diastereomers in polarized epithelial cells. This is Multidrug resistance-associated protein 1 from Bos taurus (Bovine).